We begin with the raw amino-acid sequence, 816 residues long: Bifunctional aspartokinase/homoserine dehydrogenase (816 aa).

The segment at 1-250 is aspartokinase; it reads MKLLKFGGTS…VPNARLLKSI (250 aa). The interval 251–471 is interface; it reads SYQEAMELSY…FNKKTIHMFL (221 aa). The ACT domain maps to 402–479; that stretch reads IVGSNIYKKH…FLIGIGGIGS (78 aa). The segment at 472 to 816 is homoserine dehydrogenase; it reads IGIGGIGSTL…VFSDLLRTLS (345 aa). The NAD(+) site is built by G476, I477, and A505. Residue I477 participates in NADP(+) binding. I477 contacts NADPH. Residues K508 and T556 each coordinate NADP(+). T556 contributes to the NAD(+) binding site. Residues T556, S557, S578, and K580 each coordinate NADPH. NADP(+)-binding residues include S578 and K580. Positions 607, 610, 612, and 614 each coordinate Na(+). NADP(+) is bound by residues G665 and E668. L-homoserine-binding residues include E668 and D679. Catalysis depends on K683, which acts as the Proton donor. Residue G799 coordinates NAD(+). G799 contacts NADP(+). G799 is a binding site for NADPH.

It in the N-terminal section; belongs to the aspartokinase family. The protein in the C-terminal section; belongs to the homoserine dehydrogenase family. Homotetramer. It depends on a metal cation as a cofactor.

The catalysed reaction is L-homoserine + NADP(+) = L-aspartate 4-semialdehyde + NADPH + H(+). The enzyme catalyses L-homoserine + NAD(+) = L-aspartate 4-semialdehyde + NADH + H(+). It catalyses the reaction L-aspartate + ATP = 4-phospho-L-aspartate + ADP. The protein operates within amino-acid biosynthesis; L-lysine biosynthesis via DAP pathway; (S)-tetrahydrodipicolinate from L-aspartate: step 1/4. It functions in the pathway amino-acid biosynthesis; L-methionine biosynthesis via de novo pathway; L-homoserine from L-aspartate: step 1/3. Its pathway is amino-acid biosynthesis; L-methionine biosynthesis via de novo pathway; L-homoserine from L-aspartate: step 3/3. It participates in amino-acid biosynthesis; L-threonine biosynthesis; L-threonine from L-aspartate: step 1/5. The protein operates within amino-acid biosynthesis; L-threonine biosynthesis; L-threonine from L-aspartate: step 3/5. Functionally, bifunctional aspartate kinase and homoserine dehydrogenase that catalyzes the first and the third steps toward the synthesis of lysine, methionine and threonine from aspartate. This is Bifunctional aspartokinase/homoserine dehydrogenase (thrA) from Buchnera aphidicola subsp. Acyrthosiphon pisum (strain APS) (Acyrthosiphon pisum symbiotic bacterium).